The sequence spans 1132 residues: Telomerase reverse transcriptase (1132 aa).

The tract at residues 1–230 is RNA-interacting domain 1; sequence MPRAPRCRAV…ARRRGGSASR (230 aa). A GQ motif region spans residues 58–197; the sequence is VPWDARPPPA…PHASGPRRRL (140 aa). Residues 137–141 are required for regulating specificity for telomeric DNA and for processivity for primer elongation; it reads WGLLL. Residues 210–320 are disordered; that stretch reads AGVPLGLPAP…SRPPRPWDTP (111 aa). A compositionally biased stretch (low complexity) spans 213–234; that stretch reads PLGLPAPGARRRGGSASRSLPL. The Bipartite nuclear localization signal motif lies at 222-240; sequence RRRGGSASRSLPLPKRPRR. Serine 227 carries the post-translational modification Phosphoserine; by PKB/AKT1. The linker stretch occupies residues 231–324; sequence SLPLPKRPRR…RPWDTPCPPV (94 aa). The span at 293–304 shows a compositional bias: basic residues; sequence RHSHPSVGRQHH. Residues 301–538 form a required for oligomerization region; it reads RQHHAGPPST…VPAAEHRLRE (238 aa). Positions 310–320 are enriched in pro residues; it reads TSRPPRPWDTP. Residues 325-550 form an RNA-interacting domain 2 region; sequence YAETKHFLYS…LAKFLHWLMS (226 aa). A TFLY; involved in RNA binding motif is present at residues 328 to 333; it reads TKHFLY. The interval 376–521 is QFP motif; the sequence is PRRLPRLPQR…MSVRDCAWLR (146 aa). Positions 397-417 are CP motif; it reads LGNHAQCPYGVLLKTHCPLRA. Serine 457 is subject to Phosphoserine; by DYRK2. The Reverse transcriptase domain occupies 605–935; it reads EVRQHREARP…GLFPWCGLLL (331 aa). Position 707 is a phosphotyrosine; by SRC-type Tyr-kinases (tyrosine 707). Residues aspartate 712, aspartate 868, and aspartate 869 each contribute to the Mg(2+) site. Residues 914 to 928 are required for oligomerization; that stretch reads LGGTAFVQMPAHGLF. A primer grip sequence region spans residues 930–934; it reads WCGLL. The tract at residues 936 to 1132 is CTE; sequence DTRTLEVQSD…LPSDFKTILD (197 aa).

Belongs to the reverse transcriptase family. Telomerase subfamily. Catalytic component of the telomerase holoenzyme complex composed of one molecule of TERT, one molecule of WRAP53/TCAB1, two molecules of H/ACA ribonucleoprotein complex subunits DKC1, NOP10, NHP2 and GAR1, and a telomerase RNA template component (TERC). The telomerase holoenzyme complex is associated with TEP1, SMG6/EST1A and POT1. The molecular chaperone HSP90/P23 complex is required for correct assembly and stabilization of the active telomerase. Interacts directly with HSP90A and PTGES3. Interacts with HSPA1A; the interaction occurs in the absence of TERC and dissociates once the complex has formed. Interacts with RAN; the interaction promotes nuclear export of TERT. Interacts with XPO1. Interacts with PTPN11; the interaction retains TERT in the nucleus. Interacts with NCL (via RRM1 and C-terminal RRM4/Arg/Gly-rich domains); the interaction is important for nucleolar localization of TERT. Interacts with SMARCA4 (via the bromodomain); the interaction regulates Wnt-mediated signaling. Interacts with MCRS1 (isoform MCRS2); the interaction inhibits in vitro telomerase activity. Interacts with PIF1; the interaction has no effect on the elongation activity of TERT. Interacts with PML; the interaction recruits TERT to PML bodies and inhibits telomerase activity. Interacts with GNL3L. Interacts with isoform 1 and isoform 2 of NVL. Interacts with DHX36. Interacts with ATF7. Post-translationally, phosphorylation at Tyr-707 under oxidative stress leads to translocation of TERT to the cytoplasm and reduces its antiapoptotic activity. Dephosphorylated by SHP2/PTPN11 leading to nuclear retention. Phosphorylation at Ser-227 by the AKT pathway promotes nuclear location. Phosphorylation at the G2/M phase at Ser-457 by DYRK2 promotes ubiquitination by the EDVP complex and degradation. Ubiquitinated by the EDVP complex, a E3 ligase complex following phosphorylation at Ser-457 by DYRK2. Ubiquitinated leads to proteasomal degradation. In terms of processing, (Microbial infection) In case of infection by HIV-1, the EDVP complex is hijacked by HIV-1 via interaction between HIV-1 Vpr and DCAF1/VPRBP, leading to ubiquitination and degradation. Expressed at a high level in thymocyte subpopulations, at an intermediate level in tonsil T-lymphocytes, and at a low to undetectable level in peripheral blood T-lymphocytes.

It localises to the nucleus. The protein resides in the nucleolus. Its subcellular location is the nucleoplasm. It is found in the chromosome. The protein localises to the telomere. It localises to the cytoplasm. The protein resides in the PML body. The catalysed reaction is DNA(n) + a 2'-deoxyribonucleoside 5'-triphosphate = DNA(n+1) + diphosphate. Functionally, telomerase is a ribonucleoprotein enzyme essential for the replication of chromosome termini in most eukaryotes. Active in progenitor and cancer cells. Inactive, or very low activity, in normal somatic cells. Catalytic component of the teleromerase holoenzyme complex whose main activity is the elongation of telomeres by acting as a reverse transcriptase that adds simple sequence repeats to chromosome ends by copying a template sequence within the RNA component of the enzyme. Catalyzes the RNA-dependent extension of 3'-chromosomal termini with the 6-nucleotide telomeric repeat unit, 5'-TTAGGG-3'. The catalytic cycle involves primer binding, primer extension and release of product once the template boundary has been reached or nascent product translocation followed by further extension. More active on substrates containing 2 or 3 telomeric repeats. Telomerase activity is regulated by a number of factors including telomerase complex-associated proteins, chaperones and polypeptide modifiers. Modulates Wnt signaling. Plays important roles in aging and antiapoptosis. In Homo sapiens (Human), this protein is Telomerase reverse transcriptase (TERT).